We begin with the raw amino-acid sequence, 29 residues long: Vodo peptide N (29 aa).

The segment at residues 1–29 is a cross-link (cyclopeptide (Gly-Asn)); sequence GLPVCGETCTLGKCYTAGCSCSWPVCYRN. 3 disulfides stabilise this stretch: Cys-5–Cys-19, Cys-9–Cys-21, and Cys-14–Cys-26.

This is a cyclic peptide.

Its function is as follows. Probably participates in a plant defense mechanism. The polypeptide is Vodo peptide N (Viola odorata (Sweet violet)).